The sequence spans 102 residues: Putative lipid-transfer protein DIR1 (102 aa).

A signal peptide spans 1–25; it reads MASKKAAMVMMAMIVIMAMLVDTSV. 4 disulfide bridges follow: C30–C67, C40–C56, C57–C94, and C69–C102. A 1-acyl-sn-glycero-3-phosphocholine is bound at residue Q34. E36 provides a ligand contact to Zn(2+). N38 contributes to the a 1-acyl-sn-glycero-3-phosphocholine binding site. H62 contacts Zn(2+).

Belongs to the A9/FIL1 family. As to quaternary structure, self-interacts and binds to AZI1. Does not interact with PDLP1. Requires Zn(2+) as cofactor.

It localises to the secreted. The protein resides in the extracellular space. Its subcellular location is the apoplast. The protein localises to the endoplasmic reticulum. It is found in the cell junction. It localises to the plasmodesma. Its function is as follows. Putative lipid transfer protein required for systemic acquired resistance (SAR) long distance signaling. May interact with a lipid-derived molecule to promote long distance signaling associated with SAR. Together with AZI1, required for glycerol-3-phosphate- (G3P) and azelaic acid- (AA) induced systemic acquired resistance (SAR). Component of plant systemic immunity involved in priming defenses in a AA-dependent manner, by modulating production and/or translocation of a mobile signal(s) during SAR. Is able to bind with high affinity monoacylated phospholipids, mainly lysophosphatidylcholines. The chain is Putative lipid-transfer protein DIR1 (DIR1) from Arabidopsis thaliana (Mouse-ear cress).